Here is a 258-residue protein sequence, read N- to C-terminus: Acetylglutamate kinase (258 aa).

Substrate is bound by residues 44-45 (GG), R66, and N158. ATP is bound by residues 181-186 (DVSGIL) and 209-211 (IIT).

This sequence belongs to the acetylglutamate kinase family. ArgB subfamily. In terms of assembly, homodimer.

The protein resides in the cytoplasm. It carries out the reaction N-acetyl-L-glutamate + ATP = N-acetyl-L-glutamyl 5-phosphate + ADP. Its pathway is amino-acid biosynthesis; L-arginine biosynthesis; N(2)-acetyl-L-ornithine from L-glutamate: step 2/4. Functionally, catalyzes the ATP-dependent phosphorylation of N-acetyl-L-glutamate. The chain is Acetylglutamate kinase from Klebsiella pneumoniae subsp. pneumoniae (strain ATCC 700721 / MGH 78578).